A 97-amino-acid polypeptide reads, in one-letter code: Putative membrane protein insertion efficiency factor (97 aa).

Belongs to the UPF0161 family.

The protein localises to the cell membrane. Could be involved in insertion of integral membrane proteins into the membrane. The protein is Putative membrane protein insertion efficiency factor of Lactobacillus johnsonii (strain CNCM I-12250 / La1 / NCC 533).